The chain runs to 181 residues: Protein GrpE (181 aa).

A compositionally biased stretch (polar residues) spans 1–10; sequence MENTQENPAT. The interval 1–33 is disordered; the sequence is MENTQENPATPSAEDIGSEKQAAQGAAPAAEAA. Over residues 21 to 33 the composition is skewed to low complexity; it reads QAAQGAAPAAEAA.

The protein belongs to the GrpE family. Homodimer.

The protein resides in the cytoplasm. In terms of biological role, participates actively in the response to hyperosmotic and heat shock by preventing the aggregation of stress-denatured proteins, in association with DnaK and GrpE. It is the nucleotide exchange factor for DnaK and may function as a thermosensor. Unfolded proteins bind initially to DnaJ; upon interaction with the DnaJ-bound protein, DnaK hydrolyzes its bound ATP, resulting in the formation of a stable complex. GrpE releases ADP from DnaK; ATP binding to DnaK triggers the release of the substrate protein, thus completing the reaction cycle. Several rounds of ATP-dependent interactions between DnaJ, DnaK and GrpE are required for fully efficient folding. The protein is Protein GrpE of Burkholderia cenocepacia (strain ATCC BAA-245 / DSM 16553 / LMG 16656 / NCTC 13227 / J2315 / CF5610) (Burkholderia cepacia (strain J2315)).